A 361-amino-acid polypeptide reads, in one-letter code: MDMALPVSAIGFEGFEKRLEISFFEPGLFADPNGKGLRSLSKAQLDEILGPAECTIVDSLSNDDVDSYVLSESSLFVYSYKIIIKTCGTTKLLLAIPPILKLAETLSLKVQDVRYTRGSFIFPGAQSFPHRHFSEEVAVLDGYFGKLAAGSKAVIMGSPDKAQKWHVYSASAGPIQSNDPVYTLEMCMTGLDREKASVFYKTEGSSAAHMTVRSGIRKILPNSEICDFEFEPCGYSMNSIEGAALSTIHITPEDGFSYASFEAVGYDMKTMKLGPLVERVLACFEPDEFSIALHADVATKLLERVCSVDVKGYSLAEWSPEEFGKGGSIVYQKFTRTPFCGSPKSVLKGCWKEDEEKEEKE.

Residues E13 and E16 contribute to the active site. S73 functions as the Schiff-base intermediate with substrate; via pyruvic acid in the catalytic mechanism. S73 carries the post-translational modification Pyruvic acid (Ser); by autocatalysis. C87 serves as the catalytic Proton donor; for catalytic activity. Active-site proton acceptor; for processing activity residues include S236 and H249.

Belongs to the eukaryotic AdoMetDC family. The cofactor is pyruvate. Is synthesized initially as an inactive proenzyme. Formation of the active enzyme involves a self-maturation process in which the active site pyruvoyl group is generated from an internal serine residue via an autocatalytic post-translational modification. Two non-identical subunits are generated from the proenzyme in this reaction, and the pyruvate is formed at the N-terminus of the alpha chain, which is derived from the carboxyl end of the proenzyme. The post-translation cleavage follows an unusual pathway, termed non-hydrolytic serinolysis, in which the side chain hydroxyl group of the serine supplies its oxygen atom to form the C-terminus of the beta chain, while the remainder of the serine residue undergoes an oxidative deamination to produce ammonia and the pyruvoyl group blocking the N-terminus of the alpha chain.

The enzyme catalyses S-adenosyl-L-methionine + H(+) = S-adenosyl 3-(methylsulfanyl)propylamine + CO2. It functions in the pathway amine and polyamine biosynthesis; S-adenosylmethioninamine biosynthesis; S-adenosylmethioninamine from S-adenosyl-L-methionine: step 1/1. In Nicotiana sylvestris (Wood tobacco), this protein is S-adenosylmethionine decarboxylase proenzyme (SAMDC1).